The sequence spans 187 residues: Small ribosomal subunit protein uS5 (187 aa).

The disordered stretch occupies residues 1 to 20 (MAERENRRDRRDDRSREETP). An S5 DRBM domain is found at 22 to 85 (FADRLVAINR…EQAKRQMIRV (64 aa)).

The protein belongs to the universal ribosomal protein uS5 family. Part of the 30S ribosomal subunit. Contacts proteins S4 and S8.

With S4 and S12 plays an important role in translational accuracy. Its function is as follows. Located at the back of the 30S subunit body where it stabilizes the conformation of the head with respect to the body. This Cereibacter sphaeroides (strain ATCC 17029 / ATH 2.4.9) (Rhodobacter sphaeroides) protein is Small ribosomal subunit protein uS5.